The following is a 111-amino-acid chain: Colicin-Ia immunity protein (111 aa).

A run of 2 helical transmembrane segments spans residues 33 to 53 and 85 to 105; these read LLFW…KWYI and TGTV…SVII.

The protein localises to the cell membrane. Functionally, this protein is able to protect a cell, which harbors the plasmid ColIa-CA53 encoding colicin Ia, against colicin Ia. In Escherichia coli, this protein is Colicin-Ia immunity protein.